Here is a 599-residue protein sequence, read N- to C-terminus: Elongation factor 4 (599 aa).

Residues 5-187 (SHIRNFSIIA…RLVQSIPAPE (183 aa)) form the tr-type G domain. Residues 17–22 (DHGKST) and 134–137 (NKMD) contribute to the GTP site.

It belongs to the TRAFAC class translation factor GTPase superfamily. Classic translation factor GTPase family. LepA subfamily.

Its subcellular location is the cell inner membrane. It carries out the reaction GTP + H2O = GDP + phosphate + H(+). Its function is as follows. Required for accurate and efficient protein synthesis under certain stress conditions. May act as a fidelity factor of the translation reaction, by catalyzing a one-codon backward translocation of tRNAs on improperly translocated ribosomes. Back-translocation proceeds from a post-translocation (POST) complex to a pre-translocation (PRE) complex, thus giving elongation factor G a second chance to translocate the tRNAs correctly. Binds to ribosomes in a GTP-dependent manner. In Pseudomonas entomophila (strain L48), this protein is Elongation factor 4.